The primary structure comprises 389 residues: Probable acyl-CoA dehydrogenase fadE25 (389 aa).

The protein belongs to the acyl-CoA dehydrogenase family. FAD is required as a cofactor.

The enzyme catalyses a 2,3-saturated acyl-CoA + A = a 2,3-dehydroacyl-CoA + AH2. This chain is Probable acyl-CoA dehydrogenase fadE25 (fadE25), found in Mycobacterium bovis (strain ATCC BAA-935 / AF2122/97).